We begin with the raw amino-acid sequence, 312 residues long: MPSAIEAIYIILIAGELTIGIWGNGFIVLVNCIDWLKRRDISLIDIILISLAISRICLLCVISLDGFFMLLFPGTYGNSVLVSIVNVVWTFANNSSLWFTSCLSIFYLLKIANISHPFFFWLKLKINKVMLAILLGSFLISLIISVPKNDDMWYHLFKVSHEENITWKFKVSKIPGTFKQLTLNLGVMVPFILCLISFFLLLFSLVRHTKQIRLHATGFRDPSTEAHMRAIKAVIIFLLLLIVYYPVFLVMTSSALIPQGKLVLMIGDIVTVIFPSSHSFILIMGNSKLREAFLKMLRFVKCFLRRRKPFVP.

The Extracellular segment spans residues 1 to 9 (MPSAIEAIY). The chain crosses the membrane as a helical span at residues 10-32 (IILIAGELTIGIWGNGFIVLVNC). The Cytoplasmic portion of the chain corresponds to 33–52 (IDWLKRRDISLIDIILISLA). Residues 53–72 (ISRICLLCVISLDGFFMLLF) form a helical membrane-spanning segment. The Extracellular segment spans residues 73 to 86 (PGTYGNSVLVSIVN). Residues 87–109 (VVWTFANNSSLWFTSCLSIFYLL) form a helical membrane-spanning segment. At 110 to 128 (KIANISHPFFFWLKLKINK) the chain is on the cytoplasmic side. The helical transmembrane segment at 129 to 146 (VMLAILLGSFLISLIISV) threads the bilayer. The Extracellular segment spans residues 147-180 (PKNDDMWYHLFKVSHEENITWKFKVSKIPGTFKQ). An N-linked (GlcNAc...) asparagine glycan is attached at N164. Residues 181–203 (LTLNLGVMVPFILCLISFFLLLF) traverse the membrane as a helical segment. Over 204 to 234 (SLVRHTKQIRLHATGFRDPSTEAHMRAIKAV) the chain is Cytoplasmic. A helical membrane pass occupies residues 235–257 (IIFLLLLIVYYPVFLVMTSSALI). Topologically, residues 258–261 (PQGK) are extracellular. Residues 262 to 284 (LVLMIGDIVTVIFPSSHSFILIM) form a helical membrane-spanning segment. Residues 285 to 312 (GNSKLREAFLKMLRFVKCFLRRRKPFVP) are Cytoplasmic-facing.

Belongs to the G-protein coupled receptor T2R family. Expressed in subsets of taste receptor cells of the tongue and palate epithelium and exclusively in gustducin-positive cells.

It is found in the membrane. Its function is as follows. Gustducin-coupled receptor implicated in the perception of bitter compounds in the oral cavity and the gastrointestinal tract. Signals through PLCB2 and the calcium-regulated cation channel TRPM5. The polypeptide is Taste receptor type 2 member 9 (TAS2R9) (Homo sapiens (Human)).